The chain runs to 206 residues: Outer-membrane lipoprotein carrier protein (206 aa).

An N-terminal signal peptide occupies residues 1–21; sequence MTRLLFVLVLSVCLLPVPVKA.

It belongs to the LolA family. Monomer.

It localises to the periplasm. Functionally, participates in the translocation of lipoproteins from the inner membrane to the outer membrane. Only forms a complex with a lipoprotein if the residue after the N-terminal Cys is not an aspartate (The Asp acts as a targeting signal to indicate that the lipoprotein should stay in the inner membrane). This Nitrosomonas europaea (strain ATCC 19718 / CIP 103999 / KCTC 2705 / NBRC 14298) protein is Outer-membrane lipoprotein carrier protein.